The following is a 131-amino-acid chain: Aspartate 1-decarboxylase (131 aa).

S25 (schiff-base intermediate with substrate; via pyruvic acid) is an active-site residue. S25 carries the post-translational modification Pyruvic acid (Ser). Residue T57 participates in substrate binding. The active-site Proton donor is the Y58. G73–A75 provides a ligand contact to substrate.

This sequence belongs to the PanD family. Heterooctamer of four alpha and four beta subunits. Pyruvate is required as a cofactor. Post-translationally, is synthesized initially as an inactive proenzyme, which is activated by self-cleavage at a specific serine bond to produce a beta-subunit with a hydroxyl group at its C-terminus and an alpha-subunit with a pyruvoyl group at its N-terminus.

The protein localises to the cytoplasm. The catalysed reaction is L-aspartate + H(+) = beta-alanine + CO2. It functions in the pathway cofactor biosynthesis; (R)-pantothenate biosynthesis; beta-alanine from L-aspartate: step 1/1. In terms of biological role, catalyzes the pyruvoyl-dependent decarboxylation of aspartate to produce beta-alanine. The polypeptide is Aspartate 1-decarboxylase (Chlorobium phaeobacteroides (strain DSM 266 / SMG 266 / 2430)).